A 1009-amino-acid polypeptide reads, in one-letter code: MSSRHDKEKGVNVQVLLRCRPFSDDELRSNAPQVLTCNDLQREVAVSQNIAGKHIDRVFTFDKVFGPSAQQKDLYDQAVVPIVNEVLEGFNCTIFAYGQTGTGKTYTMEGECRRSKSAPCGGLPAEAGVIPRAVKQIFDTLEGQQAEYSVKVTFLELYNEEITDLLAPEDLSRVAAEEKQKKPLPLMEDGKGGVLVRGLEEEIVTSANEIFTLLERGSSKRRTAETFLNKQSSRSHSLFSITIHIKEATPEGEELIKCGKLNLVDLAGSENISRSGARDGRAREAGEINKSLLTLGRVISALVEHLGHVPYRDSKLTRLLRDSLGGRTKTCIIATVSPAVHCLEETLSTLDYAHRAKNIRNKPEVNQKMMKSTLIKDLYGEIERLKAEVYASREKNGVYMPKERYYQEESERKVMAEQIEQMGGQIENYQKQLEELQDKYVGQVRECSDLTTKLDITEKNLSQTCKVLASTNEELKKSQYAMKEKDFIISEQKKSENVLVQQACILQSNLEKATKDNSSLHQKIGREDKLSADNRKVVDNYQVELSEQISNLFNRVASCLSQQNVHLQGVNKLSQSRLEAHNKAILEMKKKVKASRDLYSSHLEAVQNVVRLHKANANACLEEVSALTTSSACSIDEFLASGDETTSSLFDELQSALSSHQGEMALFARELRQRFHTTMEQTQEMSEYTSTFFQKLMEESKNAETRAAEANDSQINSIIDFQKTYEAQSKSDTDKLIADLTNLVSSHIRRQHELVDSRLHNFKDAVSSNKTFLDEHVSAVNNLTKDAKRKWETFSMQAENEAREGADFSAAKHCRMELLLQQSVGHAESAFKHCKITHESLKEMTSKQVTDVSSLVRSACDSNEQHDAEVDSARTAAEKDVTKNSDDIIQQIERMSEDEKASVSKILENVRSHEKTLESFQQDQCCQARCIEDKAQETFQQQYMEYEPTGATPTKNEPEIPTKATIESLRAMPIETLVEEFRENNSYESFATKETKPQQLTRSPLSQVN.

Residues 12 to 359 enclose the Kinesin motor domain; it reads NVQVLLRCRP…LDYAHRAKNI (348 aa). 98–105 contributes to the ATP binding site; the sequence is GQTGTGKT. Residues 406–526 are a coiled coil; sequence YQEESERKVM…NSSLHQKIGR (121 aa). 2 disordered regions span residues 862–882 and 987–1009; these read SNEQHDAEVDSARTAAEKDVT and YESFATKETKPQQLTRSPLSQVN. Basic and acidic residues-rich tracts occupy residues 863–882 and 987–996; these read NEQHDAEVDSARTAAEKDVT and YESFATKETK. The segment covering 997 to 1009 has biased composition (polar residues); that stretch reads PQQLTRSPLSQVN.

The protein belongs to the TRAFAC class myosin-kinesin ATPase superfamily. Kinesin family. KIN-5/BimC subfamily.

It is found in the cytoplasm. The protein resides in the cytoskeleton. It localises to the spindle. In terms of biological role, responsible for microtubule translocation. May be important for the organization of phragmoplast-specific arrays of microtubules. Plays an essential role in stabilizing the mitotic spindle. Required during mitotic cytokinesis. The protein is Kinesin-like protein KIN-5C of Arabidopsis thaliana (Mouse-ear cress).